Reading from the N-terminus, the 296-residue chain is Acetylglutamate kinase (296 aa).

Substrate contacts are provided by residues 67-68 (GG), arginine 89, and asparagine 194.

The protein belongs to the acetylglutamate kinase family. ArgB subfamily.

Its subcellular location is the cytoplasm. It carries out the reaction N-acetyl-L-glutamate + ATP = N-acetyl-L-glutamyl 5-phosphate + ADP. The protein operates within amino-acid biosynthesis; L-arginine biosynthesis; N(2)-acetyl-L-ornithine from L-glutamate: step 2/4. Functionally, catalyzes the ATP-dependent phosphorylation of N-acetyl-L-glutamate. This chain is Acetylglutamate kinase, found in Brucella abortus (strain S19).